Here is a 428-residue protein sequence, read N- to C-terminus: Autophagy-related protein 14 (428 aa).

A coiled-coil region spans residues 82–143 (QEAIDRTAEI…RKKQLDKVKD (62 aa)).

It belongs to the ATG14 family. Component of the autophagy-specific VPS34 PI3-kinase complex I.

It localises to the preautophagosomal structure membrane. It is found in the vacuole membrane. Required for cytoplasm to vacuole transport (Cvt) and autophagy as a part of the autophagy-specific VPS34 PI3-kinase complex I. This complex is essential to recruit the ATG8-phosphatidylinositol conjugate and the ATG12-ATG5 conjugate to the pre-autophagosomal structure. ATG14 mediates the specific binding of the VPS34 PI3-kinase complex I to the preautophagosomal structure (PAS). Plays a crucial role in hyphal development, conidiogenesis and pathogenicity. Also required for glycogen mobilization, quantity of lipid bodies, and the turgor pressure of appressoria. The protein is Autophagy-related protein 14 of Pyricularia oryzae (strain 70-15 / ATCC MYA-4617 / FGSC 8958) (Rice blast fungus).